The primary structure comprises 396 residues: 1-deoxy-D-xylulose 5-phosphate reductoisomerase (396 aa).

NADPH contacts are provided by threonine 10, glycine 11, serine 12, isoleucine 13, glycine 36, lysine 37, asparagine 38, and asparagine 124. Lysine 125 contributes to the 1-deoxy-D-xylulose 5-phosphate binding site. Glutamate 126 is an NADPH binding site. Aspartate 150 is a Mn(2+) binding site. 1-deoxy-D-xylulose 5-phosphate contacts are provided by serine 151, glutamate 152, serine 186, and histidine 209. Glutamate 152 provides a ligand contact to Mn(2+). Residue glycine 215 participates in NADPH binding. The 1-deoxy-D-xylulose 5-phosphate site is built by serine 222, asparagine 227, lysine 228, and glutamate 231. Position 231 (glutamate 231) interacts with Mn(2+).

It belongs to the DXR family. It depends on Mg(2+) as a cofactor. Mn(2+) serves as cofactor.

The catalysed reaction is 2-C-methyl-D-erythritol 4-phosphate + NADP(+) = 1-deoxy-D-xylulose 5-phosphate + NADPH + H(+). It functions in the pathway isoprenoid biosynthesis; isopentenyl diphosphate biosynthesis via DXP pathway; isopentenyl diphosphate from 1-deoxy-D-xylulose 5-phosphate: step 1/6. Catalyzes the NADPH-dependent rearrangement and reduction of 1-deoxy-D-xylulose-5-phosphate (DXP) to 2-C-methyl-D-erythritol 4-phosphate (MEP). This Actinobacillus pleuropneumoniae serotype 5b (strain L20) protein is 1-deoxy-D-xylulose 5-phosphate reductoisomerase.